A 185-amino-acid polypeptide reads, in one-letter code: Ribosome-recycling factor (185 aa).

Belongs to the RRF family.

The protein localises to the cytoplasm. Responsible for the release of ribosomes from messenger RNA at the termination of protein biosynthesis. May increase the efficiency of translation by recycling ribosomes from one round of translation to another. The protein is Ribosome-recycling factor of Clostridium kluyveri (strain NBRC 12016).